Reading from the N-terminus, the 134-residue chain is Iron-sulfur cluster insertion protein ErpA (134 aa).

Residues cysteine 47, cysteine 126, and cysteine 128 each contribute to the iron-sulfur cluster site.

The protein belongs to the HesB/IscA family. Homodimer. The cofactor is iron-sulfur cluster.

In terms of biological role, required for insertion of 4Fe-4S clusters for at least IspG. This chain is Iron-sulfur cluster insertion protein ErpA, found in Coxiella burnetii (strain Dugway 5J108-111).